Here is a 316-residue protein sequence, read N- to C-terminus: Small ribosomal subunit protein RACK1 (316 aa).

WD repeat units follow at residues 13-44 (GHNGWVTSLATSLENPNMLLSGSRDKSLIIWN), 61-91 (GHSHIVSDCVISSDGAYALSASWDKTLRLWE), 103-133 (GHTNDVLSVSFSADNRQIVSGSRDRTIKLWN), 146-178 (GHTEWVSCVRFSPNPQNPVIVSSGWDKLVKVWE), 190-220 (GHTGYINAVTISPDGSLCASGGKDGTTMLWD), 231-260 (NANDEIHALVFSPNRYWLCAATSSSIIIFD), and 281-311 (SREPECVSLAWSADGQTLFAGYTDNIIRAWG).

This sequence belongs to the WD repeat G protein beta family. Ribosomal protein RACK1 subfamily. Component of the small ribosomal subunit (SSU). Mature N.crassa ribosomes consist of a small (40S) and a large (60S) subunit. The 40S small subunit contains 1 molecule of ribosomal RNA (18S rRNA) and at least 32 different proteins. The large 60S subunit contains 3 rRNA molecules (26S, 5.8S and 5S rRNA) and at least 42 different proteins.

The protein localises to the cytoplasm. In terms of biological role, component of the ribosome, a large ribonucleoprotein complex responsible for the synthesis of proteins in the cell. The small ribosomal subunit (SSU) binds messenger RNAs (mRNAs) and translates the encoded message by selecting cognate aminoacyl-transfer RNA (tRNA) molecules. The large subunit (LSU) contains the ribosomal catalytic site termed the peptidyl transferase center (PTC), which catalyzes the formation of peptide bonds, thereby polymerizing the amino acids delivered by tRNAs into a polypeptide chain. The nascent polypeptides leave the ribosome through a tunnel in the LSU and interact with protein factors that function in enzymatic processing, targeting, and the membrane insertion of nascent chains at the exit of the ribosomal tunnel. Required to activate general amino acid control under conditions of amino acid limitation in the vegetative growth phase, and for formation of protoperithecia in preparation for the sexual phase of the life cycle of N.crassa. The polypeptide is Small ribosomal subunit protein RACK1 (cpc-2) (Neurospora crassa (strain ATCC 24698 / 74-OR23-1A / CBS 708.71 / DSM 1257 / FGSC 987)).